Consider the following 241-residue polypeptide: 1-(5-phosphoribosyl)-5-[(5-phosphoribosylamino)methylideneamino] imidazole-4-carboxamide isomerase (241 aa).

D10 functions as the Proton acceptor in the catalytic mechanism. The active-site Proton donor is D131.

This sequence belongs to the HisA/HisF family.

The protein localises to the cytoplasm. The catalysed reaction is 1-(5-phospho-beta-D-ribosyl)-5-[(5-phospho-beta-D-ribosylamino)methylideneamino]imidazole-4-carboxamide = 5-[(5-phospho-1-deoxy-D-ribulos-1-ylimino)methylamino]-1-(5-phospho-beta-D-ribosyl)imidazole-4-carboxamide. The protein operates within amino-acid biosynthesis; L-histidine biosynthesis; L-histidine from 5-phospho-alpha-D-ribose 1-diphosphate: step 4/9. This Bifidobacterium longum (strain DJO10A) protein is 1-(5-phosphoribosyl)-5-[(5-phosphoribosylamino)methylideneamino] imidazole-4-carboxamide isomerase.